We begin with the raw amino-acid sequence, 230 residues long: uncharacterized protein (230 aa).

Positions 1–11 (MPVPSVTVTTD) are enriched in polar residues. A disordered region spans residues 1 to 88 (MPVPSVTVTT…TLKRPTSNSI (88 aa)). The span at 63 to 73 (DDQHRHSDVHS) shows a compositional bias: basic and acidic residues. Polar residues predominate over residues 79-88 (TLKRPTSNSI). Serine 106 carries the post-translational modification Phosphoserine. Positions 156-179 (LKREDSRVSSTKKEHINDHTDMHS) are enriched in basic and acidic residues. Residues 156–203 (LKREDSRVSSTKKEHINDHTDMHSTRSKVTTNSQGSSLEPNKLNMAVE) are disordered. Over residues 182–194 (SKVTTNSQGSSLE) the composition is skewed to polar residues.

This is an uncharacterized protein from Saccharomyces cerevisiae (strain ATCC 204508 / S288c) (Baker's yeast).